The following is a 1343-amino-acid chain: Protein cordon-bleu (1343 aa).

Disordered regions lie at residues 1–51 (MNLG…GDCK), 301–479 (KVEL…PAAE), 522–613 (VSVA…NGYE), 733–808 (IDKP…TRVL), 1056–1077 (EKPT…KSLD), and 1105–1148 (INNF…NVFG). A compositionally biased stretch (pro residues) spans 20 to 30 (APPPPRPPQPA). The KKRRAP 1 signature appears at 305–310 (KKRRAP). Polar residues predominate over residues 324–335 (SQISLGSPSSHN). Positions 338 to 343 (KKRKAP) match the KKRRAP 2 motif. Pro residues predominate over residues 343-354 (PAPPPTPPPSTP). A compositionally biased stretch (basic and acidic residues) spans 390-400 (DLSHSIEDSEP). The segment covering 406–422 (SSSSGDDAAAVGSSSSS) has biased composition (low complexity). Positions 445–460 (PEPKPEYEPELKKEAS) are enriched in basic and acidic residues. A compositionally biased stretch (polar residues) spans 552–573 (ERMQSVSPMDIMSLNSDSTLPV). The span at 746 to 757 (PSQDAKITDNME) shows a compositional bias: basic and acidic residues. Residues 773–789 (VELTSQKDTVLQKSQSF) show a composition bias toward polar residues. The segment covering 1105–1122 (INNFPDTSSARQTPTDTT) has biased composition (polar residues). Residues 1128 to 1137 (KKPELHKSEI) show a composition bias toward basic and acidic residues. WH2 domains are found at residues 1167–1187 (IHSS…LRKV) and 1207–1227 (ERSA…LKKT). A disordered region spans residues 1246–1297 (NVHTEVISPRPTSPDFVPPLPPSFSPPPPPPPPLAPAKPPVVLPPGGNPEAA). Residues 1261-1292 (FVPPLPPSFSPPPPPPPPLAPAKPPVVLPPGG) show a composition bias toward pro residues. The region spanning 1297-1317 (AREALLEAIRSGSGAQQLRKV) is the WH2 3 domain.

As to quaternary structure, interacts with pacsin1.

It localises to the cell membrane. It is found in the cytoplasm. The protein localises to the cytoskeleton. Its subcellular location is the cell projection. The protein resides in the ruffle. It localises to the cytosol. In terms of biological role, plays an important role in the reorganization of the actin cytoskeleton. Binds to and sequesters actin monomers (G actin). Nucleates actin polymerization by assembling three actin monomers in cross-filament orientation and thereby promotes growth of actin filaments at the barbed end. Can also mediate actin depolymerization at barbed ends and severing of actin filaments. Promotes formation of cell ruffles. Regulates neuron morphogenesis and increases branching of axons and dendrites. Required for normal embryonic development, including normal development of laterality, normal body size and shape, as well as normal brain, heart and kidney development. Required for normal development of stereocilia and kinocilia in sensory hair cells of neuromasts in the posterior lateral line organ, and thus also for balance keeping and normal swimming behavior. The polypeptide is Protein cordon-bleu (cobl) (Danio rerio (Zebrafish)).